A 312-amino-acid chain; its full sequence is DNA primase small subunit PriS (312 aa).

Catalysis depends on residues D88, D90, and D215.

Belongs to the eukaryotic-type primase small subunit family. Heterodimer of a small subunit (PriS) and a large subunit (PriL). Mg(2+) serves as cofactor. It depends on Mn(2+) as a cofactor.

Catalytic subunit of DNA primase, an RNA polymerase that catalyzes the synthesis of short RNA molecules used as primers for DNA polymerase during DNA replication. The small subunit contains the primase catalytic core and has DNA synthesis activity on its own. Binding to the large subunit stabilizes and modulates the activity, increasing the rate of DNA synthesis while decreasing the length of the DNA fragments, and conferring RNA synthesis capability. The DNA polymerase activity may enable DNA primase to also catalyze primer extension after primer synthesis. May also play a role in DNA repair. This Pyrobaculum islandicum (strain DSM 4184 / JCM 9189 / GEO3) protein is DNA primase small subunit PriS.